The primary structure comprises 636 residues: 1,4-alpha-glucan branching enzyme GlgB (636 aa).

D309 serves as the catalytic Nucleophile. The Proton donor role is filled by E362.

The protein belongs to the glycosyl hydrolase 13 family. GlgB subfamily. In terms of assembly, monomer.

It carries out the reaction Transfers a segment of a (1-&gt;4)-alpha-D-glucan chain to a primary hydroxy group in a similar glucan chain.. It functions in the pathway glycan biosynthesis; glycogen biosynthesis. In terms of biological role, catalyzes the formation of the alpha-1,6-glucosidic linkages in glycogen by scission of a 1,4-alpha-linked oligosaccharide from growing alpha-1,4-glucan chains and the subsequent attachment of the oligosaccharide to the alpha-1,6 position. The sequence is that of 1,4-alpha-glucan branching enzyme GlgB from Aromatoleum aromaticum (strain DSM 19018 / LMG 30748 / EbN1) (Azoarcus sp. (strain EbN1)).